Here is a 159-residue protein sequence, read N- to C-terminus: 6,7-dimethyl-8-ribityllumazine synthase (159 aa).

5-amino-6-(D-ribitylamino)uracil-binding positions include phenylalanine 23, 58–60 (AYE), and 82–84 (TII). Catalysis depends on histidine 90, which acts as the Proton donor. Residue leucine 115 coordinates 5-amino-6-(D-ribitylamino)uracil. Arginine 129 serves as a coordination point for (2S)-2-hydroxy-3-oxobutyl phosphate.

Belongs to the DMRL synthase family. As to quaternary structure, forms an icosahedral capsid composed of 60 subunits, arranged as a dodecamer of pentamers.

The enzyme catalyses (2S)-2-hydroxy-3-oxobutyl phosphate + 5-amino-6-(D-ribitylamino)uracil = 6,7-dimethyl-8-(1-D-ribityl)lumazine + phosphate + 2 H2O + H(+). The protein operates within cofactor biosynthesis; riboflavin biosynthesis; riboflavin from 2-hydroxy-3-oxobutyl phosphate and 5-amino-6-(D-ribitylamino)uracil: step 1/2. Catalyzes the formation of 6,7-dimethyl-8-ribityllumazine by condensation of 5-amino-6-(D-ribitylamino)uracil with 3,4-dihydroxy-2-butanone 4-phosphate. This is the penultimate step in the biosynthesis of riboflavin. This chain is 6,7-dimethyl-8-ribityllumazine synthase, found in Blochmanniella floridana.